The sequence spans 568 residues: Sphingosine-1-phosphate lyase 1 (568 aa).

At 1–41 the chain is on the lumenal side; that stretch reads MPSTDLLKLKDFEPYLEILEAYSTKAKNYVNGYCTKYEPWQ. A helical; Signal-anchor for type III membrane protein transmembrane segment spans residues 42–62; that stretch reads LIAGSVLCTLLVVWVYELIFQ. The Cytoplasmic segment spans residues 63–568; it reads PESLWSRFKN…NQMNGSPKPR (506 aa). The residue at position 353 (K353) is an N6-(pyridoxal phosphate)lysine; alternate. K353 is subject to N6-acetyllysine; alternate. Y356 and Y366 each carry 3'-nitrotyrosine. S564 is subject to Phosphoserine.

This sequence belongs to the group II decarboxylase family. Sphingosine-1-phosphate lyase subfamily. As to quaternary structure, homodimer. Pyridoxal 5'-phosphate serves as cofactor.

Its subcellular location is the endoplasmic reticulum membrane. The enzyme catalyses sphinganine 1-phosphate = hexadecanal + phosphoethanolamine. It carries out the reaction sphing-4-enine 1-phosphate = (2E)-hexadecenal + phosphoethanolamine. The protein operates within lipid metabolism; sphingolipid metabolism. In terms of biological role, cleaves phosphorylated sphingoid bases (PSBs), such as sphingosine-1-phosphate, into fatty aldehydes and phosphoethanolamine. Elevates stress-induced ceramide production and apoptosis. Required for global lipid homeostasis in liver and cholesterol homeostasis in fibroblasts. Involved in the regulation of pro-inflammatory response and neutrophil trafficking. Modulates neuronal autophagy via phosphoethanolamine production which regulates accumulation of aggregate-prone proteins such as APP. Seems to play a role in establishing neuronal contact sites and axonal maintenance. The chain is Sphingosine-1-phosphate lyase 1 from Rattus norvegicus (Rat).